The following is a 470-amino-acid chain: Putative dipeptidase TSTA_079200 (470 aa).

The helical transmembrane segment at 40–60 threads the bilayer; sequence AWLFGLGTLGIILASVLLNPF. His-92 and Asp-94 together coordinate Zn(2+). The cysteines at positions 143 and 237 are disulfide-linked. N-linked (GlcNAc...) asparagine glycosylation is present at Asn-188. Position 208 (Glu-208) interacts with Zn(2+). His-235 is a substrate binding site. Residues His-279 and His-300 each coordinate Zn(2+). Substrate-binding residues include Arg-311 and Asp-371.

This sequence belongs to the metallo-dependent hydrolases superfamily. Peptidase M19 family. It depends on Zn(2+) as a cofactor.

The protein resides in the membrane. The catalysed reaction is an L-aminoacyl-L-amino acid + H2O = 2 an L-alpha-amino acid. Functionally, hydrolyzes a wide range of dipeptides. The protein is Putative dipeptidase TSTA_079200 of Talaromyces stipitatus (strain ATCC 10500 / CBS 375.48 / QM 6759 / NRRL 1006) (Penicillium stipitatum).